Consider the following 379-residue polypeptide: Zinc metalloproteinase nas-20 (379 aa).

Residues 1 to 20 (MKITVNFLLVALIGVPSVLS) form the signal peptide. A propeptide spanning residues 21 to 29 (DRHITRDKR) is cleaved from the precursor. The Peptidase M12A domain maps to 30–208 (QAMRDYAKWE…VLLNKFYGCN (179 aa)). Asparagine 67 carries N-linked (GlcNAc...) asparagine glycosylation. 4 disulfides stabilise this stretch: cysteine 70-cysteine 207, cysteine 91-cysteine 111, cysteine 209-cysteine 229, and cysteine 234-cysteine 243. Histidine 119 contacts Zn(2+). The active site involves glutamate 120. Histidine 123 and histidine 129 together coordinate Zn(2+). Asparagine 185 carries N-linked (GlcNAc...) asparagine glycosylation. The EGF-like domain occupies 203–244 (KFYGCNCDNHPRKLDCKNGGYQNPANCEECLCTDGFNGQLCD). Residues asparagine 337 and asparagine 370 are each glycosylated (N-linked (GlcNAc...) asparagine).

The cofactor is Zn(2+).

It localises to the secreted. In terms of biological role, metalloprotease. The sequence is that of Zinc metalloproteinase nas-20 (nas-20) from Caenorhabditis elegans.